Here is a 222-residue protein sequence, read N- to C-terminus: Voltage-dependent calcium channel gamma-1 subunit (222 aa).

Residues 1–10 (MSQTKMLKVR) lie on the Cytoplasmic side of the membrane. Residues 11–29 (VTLFCILAGIVLAMTAVVT) traverse the membrane as a helical segment. At 30-108 (DHWAVLSPHM…TQKEYSISAA (79 aa)) the chain is on the extracellular side. 2 N-linked (GlcNAc...) asparagine glycosylation sites follow: asparagine 43 and asparagine 79. Cysteine 57 and cysteine 80 are joined by a disulfide. A helical transmembrane segment spans residues 109–129 (AIAIFSLGFIILGSLCVLLSL). At 130 to 134 (GKKRD) the chain is on the cytoplasmic side. The helical transmembrane segment at 135-155 (YLLRPASMFYAFAGLCILVSV) threads the bilayer. At 156-179 (EVMRQSVKRMIDSEDTVWIEYYYS) the chain is on the extracellular side. Residues 180–204 (WSFACACAAFILLFLGGLALLLFSL) form a helical membrane-spanning segment. Over 205–222 (PRMPRNPWESCMDAEPEH) the chain is Cytoplasmic.

This sequence belongs to the PMP-22/EMP/MP20 family. CACNG subfamily. Component of a calcium channel complex consisting of a pore-forming alpha subunit (CACNA1S) and the ancillary subunits CACNB1 or CACNB2, CACNG1 and CACNA2D1. The channel complex contains alpha, beta, gamma and delta subunits in a 1:1:1:1 ratio, i.e. it contains either CACNB1 or CACNB2. N-glycosylated. In terms of tissue distribution, skeletal muscle.

Its subcellular location is the cell membrane. The protein resides in the sarcolemma. Regulatory subunit of the voltage-gated calcium channel that gives rise to L-type calcium currents in skeletal muscle. Regulates channel inactivation kinetics. The chain is Voltage-dependent calcium channel gamma-1 subunit (CACNG1) from Homo sapiens (Human).